We begin with the raw amino-acid sequence, 469 residues long: Putative dipeptidase SAR1836 (469 aa).

H84 provides a ligand contact to Zn(2+). D86 is a catalytic residue. Residue D115 participates in Zn(2+) binding. The Proton acceptor role is filled by E149. Zn(2+)-binding residues include E150, D173, and H440.

The protein belongs to the peptidase M20A family. Zn(2+) is required as a cofactor.

This Staphylococcus aureus (strain MRSA252) protein is Putative dipeptidase SAR1836.